Reading from the N-terminus, the 435-residue chain is Enolase (435 aa).

Residue Gln163 coordinates (2R)-2-phosphoglycerate. Glu205 serves as the catalytic Proton donor. Mg(2+)-binding residues include Asp243, Glu292, and Asp319. Positions 344, 373, 374, and 395 each coordinate (2R)-2-phosphoglycerate. Catalysis depends on Lys344, which acts as the Proton acceptor.

This sequence belongs to the enolase family. Requires Mg(2+) as cofactor.

It localises to the cytoplasm. The protein localises to the secreted. Its subcellular location is the cell surface. It catalyses the reaction (2R)-2-phosphoglycerate = phosphoenolpyruvate + H2O. It functions in the pathway carbohydrate degradation; glycolysis; pyruvate from D-glyceraldehyde 3-phosphate: step 4/5. Functionally, catalyzes the reversible conversion of 2-phosphoglycerate (2-PG) into phosphoenolpyruvate (PEP). It is essential for the degradation of carbohydrates via glycolysis. This chain is Enolase, found in Streptococcus suis (strain 98HAH33).